A 295-amino-acid polypeptide reads, in one-letter code: Bifunctional protein FolD (295 aa).

Residues 166 to 168 (GRS), S191, and I232 each bind NADP(+).

It belongs to the tetrahydrofolate dehydrogenase/cyclohydrolase family. As to quaternary structure, homodimer.

It catalyses the reaction (6R)-5,10-methylene-5,6,7,8-tetrahydrofolate + NADP(+) = (6R)-5,10-methenyltetrahydrofolate + NADPH. It carries out the reaction (6R)-5,10-methenyltetrahydrofolate + H2O = (6R)-10-formyltetrahydrofolate + H(+). Its pathway is one-carbon metabolism; tetrahydrofolate interconversion. Catalyzes the oxidation of 5,10-methylenetetrahydrofolate to 5,10-methenyltetrahydrofolate and then the hydrolysis of 5,10-methenyltetrahydrofolate to 10-formyltetrahydrofolate. The polypeptide is Bifunctional protein FolD (Rhodopseudomonas palustris (strain BisA53)).